The primary structure comprises 99 residues: U11-barytoxin-Tl1a (99 aa).

The signal sequence occupies residues 1–21; sequence MKTLVLVAVLGLASLYLLSYA. The propeptide occupies 22-50; it reads SEVQQISRDEEDFRALMASFGGIFDTEER. Disulfide bonds link Cys-57-Cys-71, Cys-64-Cys-76, and Cys-70-Cys-90.

The protein belongs to the neurotoxin 10 (Hwtx-1) family. 25 (ICK4) subfamily. Expressed by the venom gland.

The protein resides in the secreted. Functionally, ion channel inhibitor. The protein is U11-barytoxin-Tl1a of Trittame loki (Brush-footed trapdoor spider).